Reading from the N-terminus, the 366-residue chain is Chorismate synthase (366 aa).

Arg-47 is an NADP(+) binding site. Residues Arg-124 to Ser-126, Gly-286, Lys-301 to Thr-305, and Arg-327 contribute to the FMN site.

This sequence belongs to the chorismate synthase family. Homotetramer. Requires FMNH2 as cofactor.

The enzyme catalyses 5-O-(1-carboxyvinyl)-3-phosphoshikimate = chorismate + phosphate. The protein operates within metabolic intermediate biosynthesis; chorismate biosynthesis; chorismate from D-erythrose 4-phosphate and phosphoenolpyruvate: step 7/7. In terms of biological role, catalyzes the anti-1,4-elimination of the C-3 phosphate and the C-6 proR hydrogen from 5-enolpyruvylshikimate-3-phosphate (EPSP) to yield chorismate, which is the branch point compound that serves as the starting substrate for the three terminal pathways of aromatic amino acid biosynthesis. This reaction introduces a second double bond into the aromatic ring system. In Methylacidiphilum infernorum (isolate V4) (Methylokorus infernorum (strain V4)), this protein is Chorismate synthase.